Consider the following 338-residue polypeptide: tRNA-specific 2-thiouridylase MnmA (338 aa).

ATP contacts are provided by residues 6–13 and Met32; that span reads AMSGGVDS. Cys92 (nucleophile) is an active-site residue. A disulfide bridge links Cys92 with Cys186. ATP is bound at residue Gly116. An interaction with tRNA region spans residues 134 to 136; the sequence is KDQ. Catalysis depends on Cys186, which acts as the Cysteine persulfide intermediate. Positions 288 to 289 are interaction with tRNA; sequence RY.

It belongs to the MnmA/TRMU family.

It localises to the cytoplasm. The catalysed reaction is S-sulfanyl-L-cysteinyl-[protein] + uridine(34) in tRNA + AH2 + ATP = 2-thiouridine(34) in tRNA + L-cysteinyl-[protein] + A + AMP + diphosphate + H(+). Its function is as follows. Catalyzes the 2-thiolation of uridine at the wobble position (U34) of tRNA, leading to the formation of s(2)U34. The chain is tRNA-specific 2-thiouridylase MnmA from Campylobacter jejuni subsp. jejuni serotype O:6 (strain 81116 / NCTC 11828).